Consider the following 119-residue polypeptide: UPF0102 protein PM0647 (119 aa).

Belongs to the UPF0102 family.

The protein is UPF0102 protein PM0647 of Pasteurella multocida (strain Pm70).